The primary structure comprises 477 residues: MKILFVAAEGAPFSKTGGLGDVIGALPKSLVKAGHEVAVILPYYDMVEAKFGNQIEDVLHFEVSVGWRRQYCGIKKTVLNGVTFYFIDNQYYFFRGHVYGDFDDGERFAFFQLAAIEAMERIDFIPDLLHVHDYHTAMIPFLLKEKYCWIQAYEDIETVLTIHNLEFQGQFSEGMLGDLFGVGLERYADGTLRWNNCLNWMKAGILYANRVSTVSPSYAHEIMTSQFGCNLDQILKMESGKVSGIVNGIDADLYNPQTDALLDYHFNQEDLSGKAKNKAKLQERVGLPVRADVPLVGIVSRLTRQKGFDVVVESLHHILQEDVQIVLLGTGDPAFEGAFSWFAQIYPGKLSANITFDVKLAQEIYAACDLFLMPSRFEPCGLSQMMAMRYGTLPLVHEVGGLRDTVRAFNPIEGSGTGFSFDNLSPYWLNWTFQTALDLYRNHPDIWRNLQKQAMESDFSWDTACKSYLDLYHSLVN.

Lys15 contacts ADP-alpha-D-glucose.

Belongs to the glycosyltransferase 1 family. Bacterial/plant glycogen synthase subfamily.

It carries out the reaction [(1-&gt;4)-alpha-D-glucosyl](n) + ADP-alpha-D-glucose = [(1-&gt;4)-alpha-D-glucosyl](n+1) + ADP + H(+). It participates in glycan biosynthesis; glycogen biosynthesis. Its function is as follows. Synthesizes alpha-1,4-glucan chains using ADP-glucose. This chain is Glycogen synthase, found in Streptococcus pneumoniae (strain ATCC 700669 / Spain 23F-1).